Reading from the N-terminus, the 335-residue chain is Pyridoxal 5'-phosphate synthase subunit PdxS (335 aa).

D-ribose 5-phosphate is bound at residue D59. Catalysis depends on K116, which acts as the Schiff-base intermediate with D-ribose 5-phosphate. Position 188 (G188) interacts with D-ribose 5-phosphate. K200 is a binding site for D-glyceraldehyde 3-phosphate. Residues G253 and 274-275 each bind D-ribose 5-phosphate; that span reads GS.

The protein belongs to the PdxS/SNZ family. In terms of assembly, in the presence of PdxT, forms a dodecamer of heterodimers.

The enzyme catalyses aldehydo-D-ribose 5-phosphate + D-glyceraldehyde 3-phosphate + L-glutamine = pyridoxal 5'-phosphate + L-glutamate + phosphate + 3 H2O + H(+). Its pathway is cofactor biosynthesis; pyridoxal 5'-phosphate biosynthesis. In terms of biological role, catalyzes the formation of pyridoxal 5'-phosphate from ribose 5-phosphate (RBP), glyceraldehyde 3-phosphate (G3P) and ammonia. The ammonia is provided by the PdxT subunit. Can also use ribulose 5-phosphate and dihydroxyacetone phosphate as substrates, resulting from enzyme-catalyzed isomerization of RBP and G3P, respectively. This Hyperthermus butylicus (strain DSM 5456 / JCM 9403 / PLM1-5) protein is Pyridoxal 5'-phosphate synthase subunit PdxS.